A 642-amino-acid polypeptide reads, in one-letter code: MPLLTRIRGPRDLDRLSLEQLDQLAEEIRTFLVDAVSKTGGHLGPNLGVVELTIALHRVFDSPKDRVLFDTGHQSYVHKLLTGRQDFSKLKMKGGLSGYPSQAESEHDVIENSHASTVLGWADGLAKANQVLERDDHVVAVIGDGALTGGMAWEALNNIAAAKDRPLVIVVNDNERSYAPTIGGLANHLATLRTTDGYERFLARGKDLLERTPVVGRPLYETLHGAKKGLKDFIAPQGMFEDLGLKYVGPIDGHDIEALESALARAKRFGGPVIVHCLTEKGRGYQPALQDEADRFHAVGKIHPDTGLPIASSGADWTSVFGEEMVKLGQERKDIVAITAAMLQPVGLDKFAKVFPKRVYDVGIAEQHAAVSAAGLATGGLHPVFAVYATFLNRAFDQVLMDVALHKCGVTFVLDRAGVTGTDGASHNGMWDMSILQVVPGLRLAAPRDADQVRAQLREAVDVDDAPTVVRFSKGAVGPAVPAVGRIGGMDVLREPGTDAPDVLLVSVGALAPMCLEIAGLLDKQGISATVVDPRWVKPVDEAMAPLAERHRVVVTVEDNSRVGGVGSAIAQALRDAGVDVPLRDFGIPPRFLDHASRGEVMAEIGLTAPDIARQVTGLVSKLDGRFERPTAEIDSVEPARD.

Residues histidine 73 and 113-115 (SHA) contribute to the thiamine diphosphate site. Aspartate 144 contributes to the Mg(2+) binding site. Thiamine diphosphate-binding positions include 145 to 146 (GA), asparagine 174, tyrosine 285, and glutamate 366. Mg(2+) is bound at residue asparagine 174.

This sequence belongs to the transketolase family. DXPS subfamily. In terms of assembly, homodimer. It depends on Mg(2+) as a cofactor. The cofactor is thiamine diphosphate.

It catalyses the reaction D-glyceraldehyde 3-phosphate + pyruvate + H(+) = 1-deoxy-D-xylulose 5-phosphate + CO2. It functions in the pathway metabolic intermediate biosynthesis; 1-deoxy-D-xylulose 5-phosphate biosynthesis; 1-deoxy-D-xylulose 5-phosphate from D-glyceraldehyde 3-phosphate and pyruvate: step 1/1. In terms of biological role, catalyzes the acyloin condensation reaction between C atoms 2 and 3 of pyruvate and glyceraldehyde 3-phosphate to yield 1-deoxy-D-xylulose-5-phosphate (DXP). This chain is 1-deoxy-D-xylulose-5-phosphate synthase 2, found in Streptomyces avermitilis (strain ATCC 31267 / DSM 46492 / JCM 5070 / NBRC 14893 / NCIMB 12804 / NRRL 8165 / MA-4680).